A 145-amino-acid polypeptide reads, in one-letter code: Large ribosomal subunit protein uL24 (145 aa).

Disordered stretches follow at residues 1–21 and 122–145; these read MKFN…HFNA and KAKS…KMQE. Lysine 136 is covalently cross-linked (Glycyl lysine isopeptide (Lys-Gly) (interchain with G-Cter in SUMO2)). Residue threonine 139 is modified to Phosphothreonine.

It belongs to the universal ribosomal protein uL24 family. As to quaternary structure, component of the large ribosomal subunit. Interacts with DHX33. Post-translationally, ufmylated by UFL1 in response to endoplasmic reticulum stress, promoting reticulophagy of endoplasmic reticulum sheets.

It is found in the cytoplasm. Functionally, component of the large ribosomal subunit. The ribosome is a large ribonucleoprotein complex responsible for the synthesis of proteins in the cell. The protein is Large ribosomal subunit protein uL24 (Rpl26) of Rattus norvegicus (Rat).